The primary structure comprises 516 residues: GMP synthase [glutamine-hydrolyzing] (516 aa).

A Glutamine amidotransferase type-1 domain is found at 8 to 198 (KILILDFGSQ…VVNICGCDTL (191 aa)). Residue cysteine 84 is the Nucleophile of the active site. Catalysis depends on residues histidine 172 and glutamate 174. Residues 199 to 391 (WNIENIIEND…LGLPYNMLYR (193 aa)) enclose the GMPS ATP-PPase domain. 226 to 232 (SGGVDSS) serves as a coordination point for ATP.

Homodimer.

It carries out the reaction XMP + L-glutamine + ATP + H2O = GMP + L-glutamate + AMP + diphosphate + 2 H(+). Its pathway is purine metabolism; GMP biosynthesis; GMP from XMP (L-Gln route): step 1/1. Its function is as follows. Catalyzes the synthesis of GMP from XMP. The chain is GMP synthase [glutamine-hydrolyzing] from Francisella tularensis subsp. holarctica (strain LVS).